A 398-amino-acid polypeptide reads, in one-letter code: 8-amino-7-oxononanoate synthase (398 aa).

A substrate-binding site is contributed by arginine 23. Glycine 110 to tyrosine 111 contacts pyridoxal 5'-phosphate. Histidine 135 is a binding site for substrate. Pyridoxal 5'-phosphate is bound by residues serine 181, histidine 209, and threonine 237. Residue lysine 240 is modified to N6-(pyridoxal phosphate)lysine. Threonine 354 contributes to the substrate binding site.

The protein belongs to the class-II pyridoxal-phosphate-dependent aminotransferase family. BioF subfamily. In terms of assembly, homodimer. Pyridoxal 5'-phosphate serves as cofactor.

The enzyme catalyses 6-carboxyhexanoyl-[ACP] + L-alanine + H(+) = (8S)-8-amino-7-oxononanoate + holo-[ACP] + CO2. It participates in cofactor biosynthesis; biotin biosynthesis. In terms of biological role, catalyzes the decarboxylative condensation of pimeloyl-[acyl-carrier protein] and L-alanine to produce 8-amino-7-oxononanoate (AON), [acyl-carrier protein], and carbon dioxide. The sequence is that of 8-amino-7-oxononanoate synthase from Anaeromyxobacter dehalogenans (strain 2CP-1 / ATCC BAA-258).